Here is an 84-residue protein sequence, read N- to C-terminus: Large ribosomal subunit protein bL31B (84 aa).

This sequence belongs to the bacterial ribosomal protein bL31 family. Type B subfamily. Part of the 50S ribosomal subunit.

This is Large ribosomal subunit protein bL31B from Streptomyces griseus subsp. griseus (strain JCM 4626 / CBS 651.72 / NBRC 13350 / KCC S-0626 / ISP 5235).